The primary structure comprises 69 residues: Beta-defensin 114 (69 aa).

A signal peptide spans 1–26 (MRIFYYLHFLCYVTFILPATCTLVNA). 3 disulfide bridges follow: Cys29-Cys57, Cys36-Cys50, and Cys40-Cys58.

Belongs to the beta-defensin family. Expressed in epididymis, predominantly in the caput (at protein level).

It localises to the secreted. In terms of biological role, has a salt-sensitive antimicrobial activity against Gram-negative bacteria, including E.coli, Gram-positive, including S.aureus, and fungi, including C.albicans. Binds to and neutralizes bacterial lipopolysaccharides (LPS), abolishing TNF production by macrophages challenged with LPS. Rescues the LPS-induced reduction of sperm motility in vitro and may protect from LPS-induced lethality. This Homo sapiens (Human) protein is Beta-defensin 114 (DEFB114).